Reading from the N-terminus, the 253-residue chain is Probable U3 small nucleolar RNA-associated protein 11 (253 aa).

Positions 1-26 (MAAAFRKAAKSRQREHRERSQPGFRK) are disordered. Residues lysine 74, lysine 83, and lysine 86 each participate in a glycyl lysine isopeptide (Lys-Gly) (interchain with G-Cter in SUMO2) cross-link. Position 90 is a phosphothreonine (threonine 90). Residues lysine 103, lysine 120, lysine 143, lysine 144, lysine 180, lysine 211, lysine 218, lysine 235, and lysine 236 each participate in a glycyl lysine isopeptide (Lys-Gly) (interchain with G-Cter in SUMO2) cross-link. Serine 241 carries the post-translational modification Phosphoserine. Residue lysine 246 forms a Glycyl lysine isopeptide (Lys-Gly) (interchain with G-Cter in SUMO2) linkage.

Belongs to the UTP11 family. In terms of assembly, part of the small subunit (SSU) processome, composed of more than 70 proteins and the RNA chaperone small nucleolar RNA (snoRNA) U3.

It is found in the nucleus. Its subcellular location is the nucleolus. Its function is as follows. Part of the small subunit (SSU) processome, first precursor of the small eukaryotic ribosomal subunit. During the assembly of the SSU processome in the nucleolus, many ribosome biogenesis factors, an RNA chaperone and ribosomal proteins associate with the nascent pre-rRNA and work in concert to generate RNA folding, modifications, rearrangements and cleavage as well as targeted degradation of pre-ribosomal RNA by the RNA exosome. Involved in nucleolar processing of pre-18S ribosomal RNA. This chain is Probable U3 small nucleolar RNA-associated protein 11, found in Homo sapiens (Human).